The following is an 88-amino-acid chain: MKFLLLFLVVLPIMGVFGKKNGYAVDSSGKAPECLLSNYCNNECTKVHYADKGYCCLLSCYCFGLNDDKKVLEISDTRKSYCDTTIIN.

The N-terminal stretch at 1 to 18 (MKFLLLFLVVLPIMGVFG) is a signal peptide. Residues 20–83 (KNGYAVDSSG…ISDTRKSYCD (64 aa)) enclose the LCN-type CS-alpha/beta domain. Disulfide bonds link C34/C55, C40/C60, C44/C62, and C56/C82.

The protein belongs to the long (4 C-C) scorpion toxin superfamily. Sodium channel inhibitor family. Beta subfamily. As to expression, expressed by the venom gland.

It localises to the secreted. Its function is as follows. Excitatory insect beta-toxins induce a spastic paralysis. They bind voltage-independently at site-4 of sodium channels (Nav) and shift the voltage of activation toward more negative potentials thereby affecting sodium channel activation and promoting spontaneous and repetitive firing. This toxin is active only on insects. The chain is Beta-insect excitatory toxin 1 from Androctonus australis (Sahara scorpion).